A 345-amino-acid polypeptide reads, in one-letter code: Tryptophan--tRNA ligase (345 aa).

ATP is bound by residues 22–24 (QPS) and 30–31 (GN). The 'HIGH' region signature appears at 23-31 (PSGELTIGN). D146 is a binding site for L-tryptophan. ATP-binding positions include 158–160 (GID), V197, and 206–210 (KMSKS). Residues 206–210 (KMSKS) carry the 'KMSKS' region motif.

The protein belongs to the class-I aminoacyl-tRNA synthetase family. Homodimer.

It localises to the cytoplasm. It catalyses the reaction tRNA(Trp) + L-tryptophan + ATP = L-tryptophyl-tRNA(Trp) + AMP + diphosphate + H(+). Functionally, catalyzes the attachment of tryptophan to tRNA(Trp). This Photorhabdus laumondii subsp. laumondii (strain DSM 15139 / CIP 105565 / TT01) (Photorhabdus luminescens subsp. laumondii) protein is Tryptophan--tRNA ligase.